A 963-amino-acid polypeptide reads, in one-letter code: Glycine dehydrogenase (decarboxylating) (963 aa).

An N6-(pyridoxal phosphate)lysine modification is found at K707.

This sequence belongs to the GcvP family. As to quaternary structure, the glycine cleavage system is composed of four proteins: P, T, L and H. The cofactor is pyridoxal 5'-phosphate.

The enzyme catalyses N(6)-[(R)-lipoyl]-L-lysyl-[glycine-cleavage complex H protein] + glycine + H(+) = N(6)-[(R)-S(8)-aminomethyldihydrolipoyl]-L-lysyl-[glycine-cleavage complex H protein] + CO2. The glycine cleavage system catalyzes the degradation of glycine. The P protein binds the alpha-amino group of glycine through its pyridoxal phosphate cofactor; CO(2) is released and the remaining methylamine moiety is then transferred to the lipoamide cofactor of the H protein. This Dechloromonas aromatica (strain RCB) protein is Glycine dehydrogenase (decarboxylating).